Reading from the N-terminus, the 239-residue chain is Lactate utilization protein A (239 aa).

The protein belongs to the LutA/YkgE family.

Is involved in L-lactate degradation and allows cells to grow with lactate as the sole carbon source. This is Lactate utilization protein A from Bacillus cereus (strain G9842).